The following is a 20-amino-acid chain: Cytotoxin drCT-1 (20 aa).

The protein belongs to the three-finger toxin family. Short-chain subfamily. Type IA cytotoxin sub-subfamily. Monomer in solution; Homodimer and oligomer in the presence of negatively charged lipids forming a pore with a size ranging between 20 and 30 Angstroms. Expressed by the venom gland.

The protein localises to the secreted. It is found in the target cell membrane. This three-finger cytotoxin has antiproliferative, cytotoxic and apoptotic activities. Both in vivo and in vitro experimental results suggests that this protein possess anticancer potential. Also shows neurotoxicity, cardiotoxicity and myotoxicity. This chain is Cytotoxin drCT-1, found in Daboia russelii (Russel's viper).